Here is a 401-residue protein sequence, read N- to C-terminus: Phosphoglycerate kinase (401 aa).

Substrate is bound by residues 21-23, arginine 36, 59-62, arginine 119, and arginine 160; these read DFN and HLGR. ATP contacts are provided by residues lysine 212, glutamate 330, and 357 to 360; that span reads GGDS.

The protein belongs to the phosphoglycerate kinase family. As to quaternary structure, monomer.

It localises to the cytoplasm. It carries out the reaction (2R)-3-phosphoglycerate + ATP = (2R)-3-phospho-glyceroyl phosphate + ADP. The protein operates within carbohydrate degradation; glycolysis; pyruvate from D-glyceraldehyde 3-phosphate: step 2/5. The polypeptide is Phosphoglycerate kinase (Limosilactobacillus fermentum (strain NBRC 3956 / LMG 18251) (Lactobacillus fermentum)).